Reading from the N-terminus, the 354-residue chain is S-adenosylmethionine:tRNA ribosyltransferase-isomerase (354 aa).

Belongs to the QueA family. As to quaternary structure, monomer.

Its subcellular location is the cytoplasm. It carries out the reaction 7-aminomethyl-7-carbaguanosine(34) in tRNA + S-adenosyl-L-methionine = epoxyqueuosine(34) in tRNA + adenine + L-methionine + 2 H(+). It functions in the pathway tRNA modification; tRNA-queuosine biosynthesis. In terms of biological role, transfers and isomerizes the ribose moiety from AdoMet to the 7-aminomethyl group of 7-deazaguanine (preQ1-tRNA) to give epoxyqueuosine (oQ-tRNA). The sequence is that of S-adenosylmethionine:tRNA ribosyltransferase-isomerase from Thermosynechococcus vestitus (strain NIES-2133 / IAM M-273 / BP-1).